The sequence spans 605 residues: UvrABC system protein C (605 aa).

In terms of domain architecture, GIY-YIG spans 14 to 92; the sequence is QSCGVYKMVG…IKSLKPLYNI (79 aa). Positions 202-237 constitute a UVR domain; that stretch reads KEVKEQLLFTMRKCSSEENYELAAIYRDRVKFLEQI.

This sequence belongs to the UvrC family. In terms of assembly, interacts with UvrB in an incision complex.

It localises to the cytoplasm. Its function is as follows. The UvrABC repair system catalyzes the recognition and processing of DNA lesions. UvrC both incises the 5' and 3' sides of the lesion. The N-terminal half is responsible for the 3' incision and the C-terminal half is responsible for the 5' incision. The sequence is that of UvrABC system protein C from Wolbachia pipientis wMel.